The chain runs to 360 residues: Endolytic murein transglycosylase (360 aa).

The helical transmembrane segment at 16-36 (IILSSIVVLFLIIGGAFLYGK) threads the bilayer.

This sequence belongs to the transglycosylase MltG family.

The protein resides in the cell membrane. The catalysed reaction is a peptidoglycan chain = a peptidoglycan chain with N-acetyl-1,6-anhydromuramyl-[peptide] at the reducing end + a peptidoglycan chain with N-acetylglucosamine at the non-reducing end.. Functionally, functions as a peptidoglycan terminase that cleaves nascent peptidoglycan strands endolytically to terminate their elongation. The protein is Endolytic murein transglycosylase of Bacillus subtilis (strain 168).